The chain runs to 304 residues: Beta-lactamase AER-1 (304 aa).

The first 37 residues, 1 to 37 (MYVLSVEKPTLRNKFAAGIGVVLVCVVASFIPTPVFA), serve as a signal peptide directing secretion. The active-site Acyl-ester intermediate is the serine 83. Cysteine 90 and cysteine 137 are disulfide-bonded. Positions 173–195 (ETQLDRKEPELNEGTPGDVRDTT) are disordered. 248-250 (KTG) contributes to the substrate binding site.

This sequence belongs to the class-A beta-lactamase family.

It carries out the reaction a beta-lactam + H2O = a substituted beta-amino acid. Its function is as follows. Hydrolyzes carbenicillin. Methicillin and oxacillin are weakly hydrolyzed. The polypeptide is Beta-lactamase AER-1 (aer1) (Aeromonas hydrophila).